We begin with the raw amino-acid sequence, 383 residues long: 3-phytase (383 aa).

The N-terminal stretch at 1-26 is a signal peptide; that stretch reads MNHSKTLLLTAAAGLMLTCGAVSSQA. Positions 27 to 30 are excised as a propeptide; that stretch reads KHKL. The region spanning 31–362 is the BPP domain; that stretch reads SDPYHFTVNA…VPWERIADKI (332 aa). A disordered region spans residues 364-383; the sequence is FHPQVNKQVDPRKMTDRSGK. The segment covering 372–383 has biased composition (basic and acidic residues); it reads VDPRKMTDRSGK.

It is found in the secreted. It catalyses the reaction 1D-myo-inositol hexakisphosphate + H2O = 1D-myo-inositol 1,2,4,5,6-pentakisphosphate + phosphate. The chain is 3-phytase (phy) from Bacillus sp. (strain DS11).